Here is a 149-residue protein sequence, read N- to C-terminus: 3-hydroxyacyl-[acyl-carrier-protein] dehydratase FabZ (149 aa).

Residue H48 is part of the active site.

Belongs to the thioester dehydratase family. FabZ subfamily.

It is found in the cytoplasm. The catalysed reaction is a (3R)-hydroxyacyl-[ACP] = a (2E)-enoyl-[ACP] + H2O. Involved in unsaturated fatty acids biosynthesis. Catalyzes the dehydration of short chain beta-hydroxyacyl-ACPs and long chain saturated and unsaturated beta-hydroxyacyl-ACPs. The sequence is that of 3-hydroxyacyl-[acyl-carrier-protein] dehydratase FabZ from Thermomicrobium roseum (strain ATCC 27502 / DSM 5159 / P-2).